The following is a 308-amino-acid chain: ATP synthase gamma chain (308 aa).

This sequence belongs to the ATPase gamma chain family. F-type ATPases have 2 components, CF(1) - the catalytic core - and CF(0) - the membrane proton channel. CF(1) has five subunits: alpha(3), beta(3), gamma(1), delta(1), epsilon(1). CF(0) has three main subunits: a, b and c.

The protein localises to the cell membrane. Functionally, produces ATP from ADP in the presence of a proton gradient across the membrane. The gamma chain is believed to be important in regulating ATPase activity and the flow of protons through the CF(0) complex. The protein is ATP synthase gamma chain of Saccharopolyspora erythraea (strain ATCC 11635 / DSM 40517 / JCM 4748 / NBRC 13426 / NCIMB 8594 / NRRL 2338).